We begin with the raw amino-acid sequence, 193 residues long: Probable GTP-binding protein EngB (193 aa).

One can recognise an EngB-type G domain in the interval 22 to 193 (LLPEVALAGR…AAWEAIYRHL (172 aa)). Residues 30-37 (GRSNVGKS), 57-61 (GKTQT), 75-78 (DVPG), 142-145 (TKLD), and 174-176 (FSS) each bind GTP. Mg(2+)-binding residues include Ser37 and Thr59.

This sequence belongs to the TRAFAC class TrmE-Era-EngA-EngB-Septin-like GTPase superfamily. EngB GTPase family. Mg(2+) serves as cofactor.

Necessary for normal cell division and for the maintenance of normal septation. The sequence is that of Probable GTP-binding protein EngB from Exiguobacterium sibiricum (strain DSM 17290 / CCUG 55495 / CIP 109462 / JCM 13490 / 255-15).